A 407-amino-acid chain; its full sequence is MRNIKIEKAVQRPIEQNEIEVVERKGIGHPDSISDGIAEAVSRVLSQTYKEKAGHVLHHNTDEVQITAGESDPKFGGGQIIKPIQILLTGRAANEFTLPSGETKKIGVDTIAIEAAKKFLQDTIINLDVEYGTVVECKIGQGSADLRDVFQRPNTIPSSNDTSFGVGYAPFSQTENLVLKTEELLNSKDFKKQYPFVGEDIKVMGLREKEDITLTIAAAFVSKYVDDVDAYLNMKDELKNIVNDLAAKETDLSVKTLINTADDETKKDESGYYLTVTGTSAEMGDDGSVGRGNRANGLITPNRPMSMEATSGKNPINHVGKIYNLLSNEITREVVSDVEGVKSIDMIILSQIGKPIDQPRTATAHIQTEEGYSINDVEEDVTRIINKWLENITDIKEFMLEGKLRTF.

Position 140-145 (G140–D145) interacts with ATP.

The protein belongs to the AdoMet synthase 2 family. Mg(2+) serves as cofactor.

It carries out the reaction L-methionine + ATP + H2O = S-adenosyl-L-methionine + phosphate + diphosphate. It participates in amino-acid biosynthesis; S-adenosyl-L-methionine biosynthesis; S-adenosyl-L-methionine from L-methionine: step 1/1. In terms of biological role, catalyzes the formation of S-adenosylmethionine from methionine and ATP. This Methanosphaera stadtmanae (strain ATCC 43021 / DSM 3091 / JCM 11832 / MCB-3) protein is S-adenosylmethionine synthase.